A 396-amino-acid polypeptide reads, in one-letter code: Phosphoglycerate kinase (396 aa).

Residues 23–25 (DFN), arginine 38, 61–64 (HMGK), arginine 122, and arginine 155 contribute to the substrate site. ATP contacts are provided by residues lysine 206, glycine 296, glutamate 327, and 353–356 (GGDS).

The protein belongs to the phosphoglycerate kinase family. Monomer.

Its subcellular location is the cytoplasm. The catalysed reaction is (2R)-3-phosphoglycerate + ATP = (2R)-3-phospho-glyceroyl phosphate + ADP. Its pathway is carbohydrate degradation; glycolysis; pyruvate from D-glyceraldehyde 3-phosphate: step 2/5. This is Phosphoglycerate kinase from Clostridium botulinum (strain Eklund 17B / Type B).